Here is a 137-residue protein sequence, read N- to C-terminus: Type III secretion protein HrcQb (137 aa).

The span at 1–22 (MSTEDLYQDDVESLEDYDDETA) shows a compositional bias: acidic residues. Residues 1–67 (MSTEDLYQDD…EQQAPSGLDS (67 aa)) form a disordered region. Positions 23-33 (EQEHEHEHEQQ) are enriched in basic and acidic residues. Positions 36–58 (EPDDESEYAEAEPDDDEQEEQEE) are enriched in acidic residues.

This sequence belongs to the FliN/MopA/SpaO family. In terms of assembly, homotetramer. The four monomers assemble into two tightly bound homodimers. Interacts with HrcQa.

It localises to the cytoplasm. In terms of biological role, component of the type III secretion system, which is required for effector protein delivery, parasitism, and pathogenicity. Probably participates in the formation of a C-ring-like assembly along with HrcQa. This chain is Type III secretion protein HrcQb (hrcQb), found in Pseudomonas syringae pv. tomato (strain ATCC BAA-871 / DC3000).